A 328-amino-acid polypeptide reads, in one-letter code: Ferredoxin--NADP reductase 1 (328 aa).

The FAD site is built by Glu-37, Lys-45, Tyr-49, Val-89, and Thr-310.

The protein belongs to the ferredoxin--NADP reductase type 2 family. As to quaternary structure, homodimer. Requires FAD as cofactor.

It carries out the reaction 2 reduced [2Fe-2S]-[ferredoxin] + NADP(+) + H(+) = 2 oxidized [2Fe-2S]-[ferredoxin] + NADPH. The chain is Ferredoxin--NADP reductase 1 from Latilactobacillus sakei subsp. sakei (strain 23K) (Lactobacillus sakei subsp. sakei).